Reading from the N-terminus, the 405-residue chain is Probable tRNA sulfurtransferase (405 aa).

A THUMP domain is found at 60-165 (DKVMGRLKLV…LNGIFLSSET (106 aa)). Residues 183–184 (ML), 208–209 (HF), Arg-265, Gly-287, and Gln-296 contribute to the ATP site.

This sequence belongs to the ThiI family.

The protein resides in the cytoplasm. The enzyme catalyses [ThiI sulfur-carrier protein]-S-sulfanyl-L-cysteine + a uridine in tRNA + 2 reduced [2Fe-2S]-[ferredoxin] + ATP + H(+) = [ThiI sulfur-carrier protein]-L-cysteine + a 4-thiouridine in tRNA + 2 oxidized [2Fe-2S]-[ferredoxin] + AMP + diphosphate. The catalysed reaction is [ThiS sulfur-carrier protein]-C-terminal Gly-Gly-AMP + S-sulfanyl-L-cysteinyl-[cysteine desulfurase] + AH2 = [ThiS sulfur-carrier protein]-C-terminal-Gly-aminoethanethioate + L-cysteinyl-[cysteine desulfurase] + A + AMP + 2 H(+). Its pathway is cofactor biosynthesis; thiamine diphosphate biosynthesis. Functionally, catalyzes the ATP-dependent transfer of a sulfur to tRNA to produce 4-thiouridine in position 8 of tRNAs, which functions as a near-UV photosensor. Also catalyzes the transfer of sulfur to the sulfur carrier protein ThiS, forming ThiS-thiocarboxylate. This is a step in the synthesis of thiazole, in the thiamine biosynthesis pathway. The sulfur is donated as persulfide by IscS. This Lactiplantibacillus plantarum (strain ATCC BAA-793 / NCIMB 8826 / WCFS1) (Lactobacillus plantarum) protein is Probable tRNA sulfurtransferase.